Consider the following 102-residue polypeptide: Flagellar hook-basal body complex protein FliE (102 aa).

The protein belongs to the FliE family.

The protein resides in the bacterial flagellum basal body. In Oceanobacillus iheyensis (strain DSM 14371 / CIP 107618 / JCM 11309 / KCTC 3954 / HTE831), this protein is Flagellar hook-basal body complex protein FliE.